A 212-amino-acid chain; its full sequence is Large ribosomal subunit protein uL3 (212 aa).

The tract at residues 130-155 is disordered; the sequence is KRGNMTHGSKNHRLPGSTGAGTTPGR.

This sequence belongs to the universal ribosomal protein uL3 family. As to quaternary structure, part of the 50S ribosomal subunit. Forms a cluster with proteins L14 and L19.

One of the primary rRNA binding proteins, it binds directly near the 3'-end of the 23S rRNA, where it nucleates assembly of the 50S subunit. The chain is Large ribosomal subunit protein uL3 from Rippkaea orientalis (strain PCC 8801 / RF-1) (Cyanothece sp. (strain PCC 8801)).